The following is a 41-amino-acid chain: Large ribosomal subunit protein bL36 (41 aa).

The protein belongs to the bacterial ribosomal protein bL36 family.

This Zymomonas mobilis subsp. mobilis (strain ATCC 31821 / ZM4 / CP4) protein is Large ribosomal subunit protein bL36.